The sequence spans 264 residues: DNA repair protein RecO (264 aa).

It belongs to the RecO family.

Its function is as follows. Involved in DNA repair and RecF pathway recombination. This Prosthecochloris aestuarii (strain DSM 271 / SK 413) protein is DNA repair protein RecO.